The sequence spans 314 residues: Oxidoreductase poxI (314 aa).

This sequence belongs to the NmrA-type oxidoreductase family. Isoflavone reductase subfamily.

It functions in the pathway secondary metabolite biosynthesis. Its function is as follows. Oxidoreductase; part of the gene cluster that mediates the biosynthesis of oxaleimides, cytotoxic compounds containing an unusual disubstituted succinimide moiety. The first step of the pathway is provided by the HR-PKS poxF that serves in a new mode of collaborative biosynthesis with the PKS-NRPS poxE, by providing the olefin containing amino acid substrate via the synthesis of an ACP-bound dec-4-enoate. The cytochrome P450 monooxygenase poxM-catalyzed oxidation at the alpha-position creates the enzyme-bound 2-hydroxydec-4-enoyl-ACP thioester, which may be prone to spontaneous hydrolysis to yield 2-hydroxydec-4-enoic acid due to increased electrophilicity of the carbonyl. 2-hydroxydec-4-enoic acid can then be further oxidized by poxM to yield the alpha-ketoacid 2-oxodec-4-enoicacid, which is reductively aminated by the aminotransferase poxL to yield (S,E)-2-aminodec-4-enoic acid. The Hybrid PKS-NRPS synthetase poxE then performs condensation between the octaketide product of its PKS modules and the amino group of (S,E)-2-aminodec-4-enoic acid which is activated and incorporated by the adenylation domain. The resulting aminoacyl product can be cyclized by the Diels-Alderase PoxQ and reductively released by the reductive (R) domain of poxE to yield an aldehyde intermediate. The released aldehyde is then substrate for a Knoevenagel condensation by the hydrolyase poxO followed by an oxidation at the 5-position of the pyrrolidone ring. The presence of the olefin from the amino acid building block allows for migration of the substituted allyl group to occur. This allylic transposition reaction takes place in a conjugate addition, semipinacol-like fashion to yield a succinimide intermediate. Iterative two-electron oxidations of the C7 methyl of the succinimide intermediate to the carboxylic acid can be catalyzed by one of two remaining cytochrome P450 monooxygenasess poxC or poxD to yield oxaleimide A. Subsequent oxidation yields the maleimide scaffold oxaleimide I. Both oxaleimide A and oxaleimide I can undergo oxidative modifications in the decalin ring to yield the series of products oxaleimides B to H. This chain is Oxidoreductase poxI, found in Penicillium oxalicum (strain 114-2 / CGMCC 5302) (Penicillium decumbens).